The following is a 138-amino-acid chain: Nucleoside diphosphate kinase (138 aa).

ATP-binding residues include Lys-10, Phe-58, Arg-86, Thr-92, Arg-103, and Asn-113. His-116 functions as the Pros-phosphohistidine intermediate in the catalytic mechanism.

The protein belongs to the NDK family. As to quaternary structure, homotetramer. The cofactor is Mg(2+).

It is found in the cytoplasm. The catalysed reaction is a 2'-deoxyribonucleoside 5'-diphosphate + ATP = a 2'-deoxyribonucleoside 5'-triphosphate + ADP. The enzyme catalyses a ribonucleoside 5'-diphosphate + ATP = a ribonucleoside 5'-triphosphate + ADP. In terms of biological role, major role in the synthesis of nucleoside triphosphates other than ATP. The ATP gamma phosphate is transferred to the NDP beta phosphate via a ping-pong mechanism, using a phosphorylated active-site intermediate. The sequence is that of Nucleoside diphosphate kinase from Haemophilus ducreyi (strain 35000HP / ATCC 700724).